The sequence spans 429 residues: Adenylosuccinate synthetase (429 aa).

GTP is bound by residues 12–18 and 40–42; these read GDEGKGK and GHT. The active-site Proton acceptor is the D13. Residues D13 and G40 each coordinate Mg(2+). IMP is bound by residues 13 to 16, 38 to 41, T129, R143, Q223, T238, and R302; these read DEGK and NAGH. H41 (proton donor) is an active-site residue. 298 to 304 serves as a coordination point for substrate; that stretch reads TVTGRKR. GTP contacts are provided by residues R304, 330–332, and 412–414; these read KLD and STS.

Belongs to the adenylosuccinate synthetase family. As to quaternary structure, homodimer. It depends on Mg(2+) as a cofactor.

The protein localises to the cytoplasm. The enzyme catalyses IMP + L-aspartate + GTP = N(6)-(1,2-dicarboxyethyl)-AMP + GDP + phosphate + 2 H(+). It participates in purine metabolism; AMP biosynthesis via de novo pathway; AMP from IMP: step 1/2. In terms of biological role, plays an important role in the de novo pathway of purine nucleotide biosynthesis. Catalyzes the first committed step in the biosynthesis of AMP from IMP. This is Adenylosuccinate synthetase from Sphingopyxis alaskensis (strain DSM 13593 / LMG 18877 / RB2256) (Sphingomonas alaskensis).